The following is a 149-amino-acid chain: Internal scaffolding protein ORF3 (149 aa).

It belongs to the microvidae B protein family.

It localises to the host cytoplasm. Participates in the assembly of the viral procapsid in the cytoplasm. Released from the procapsid upon genome packaging, possibly through affinity displacement by the protein ORF8, or by proteolysis. The polypeptide is Internal scaffolding protein ORF3 (Spiroplasma virus 4 (SpV4)).